A 1288-amino-acid chain; its full sequence is CLIP-associating protein 2 (1288 aa).

A disordered region spans residues 1–62 (MALSLSQDRS…AAKSGASKEG (62 aa)). 2 stretches are compositionally biased toward low complexity: residues 19-32 (GSRP…FKVP) and 40-62 (ESAS…SKEG). The interval 62–312 (GAGAVDEEDF…RTLQSCLKSS (251 aa)) is TOG 1. 3 HEAT repeats span residues 174–209 (HGAE…IRHT), 210–246 (HVPR…EWQT), and 251–288 (RHAA…HFPG). Disordered stretches follow at residues 314-571 (SVAS…SSRL) and 614-634 (ANSD…NGSI). Low complexity-rich tracts occupy residues 317 to 337 (SLPQ…RPLS) and 347 to 358 (PAGSKSSGSPAS). Polar residues-rich tracts occupy residues 406–421 (KQTL…SQVD) and 468–478 (TALSTLSTGAQ). Residues 490-493 (SRIP) carry the SXIP motif 1 motif. Positions 496–518 (QGCSRDSSPTRLSVAPSNISHIY) are enriched in polar residues. The SXIP motif 2 signature appears at 527 to 530 (SRIP). The segment covering 616 to 630 (SDASSACSERSYSSR) has biased composition (low complexity). Residues 638–889 (MRQTEDVAEV…TKLLQNHLRN (252 aa)) are TOG 2. HEAT repeat units follow at residues 718–755 (RVFS…KMGA) and 780–817 (LQFT…QMEP). Positions 891-900 (GNTAQASIGS) are enriched in polar residues. 2 disordered regions span residues 891-936 (GNTA…FDYD) and 960-1047 (SVRS…DSGV). The segment covering 912 to 931 (SWSSPLTSPTNTSQNTPSPS) has biased composition (low complexity). Over residues 963–977 (SQEDMTEPPRKREGD) the composition is skewed to basic and acidic residues. Over residues 1019–1030 (SDSSFGSSSFNK) the composition is skewed to low complexity. The span at 1036-1046 (DQEESLTDDSG) shows a compositional bias: acidic residues. 4 HEAT repeats span residues 1047 to 1086 (VDQS…ETQL), 1091 to 1128 (EHFK…RQPW), 1167 to 1204 (ISPD…RLPK), and 1209 to 1246 (QMLP…VIGE).

It belongs to the CLASP family. Interacts with microtubules.

It is found in the cytoplasm. The protein resides in the cytoskeleton. The protein localises to the microtubule organizing center. Its subcellular location is the centrosome. It localises to the chromosome. It is found in the centromere. The protein resides in the kinetochore. The protein localises to the spindle. Its subcellular location is the golgi apparatus. It localises to the trans-Golgi network. It is found in the cell membrane. The protein resides in the cell projection. The protein localises to the ruffle membrane. Functionally, microtubule plus-end tracking protein that promotes the stabilization of dynamic microtubules. Involved in the nucleation of noncentrosomal microtubules originating from the trans-Golgi network (TGN). Required for the polarization of the cytoplasmic microtubule arrays in migrating cells towards the leading edge of the cell. May act at the cell cortex to enhance the frequency of rescue of depolymerizing microtubules. This cortical microtubule stabilizing activity is regulated at least in part by phosphatidylinositol 3-kinase signaling. Also performs a similar stabilizing function at the kinetochore which is essential for the bipolar alignment of chromosomes on the mitotic spindle. The chain is CLIP-associating protein 2 (clasp2) from Danio rerio (Zebrafish).